Here is a 504-residue protein sequence, read N- to C-terminus: Cytochrome P450 2D10 (504 aa).

Residue S382 is glycosylated (O-linked (GlcNAc) serine). Residue C446 coordinates heme.

Belongs to the cytochrome P450 family. Heme serves as cofactor.

The protein resides in the endoplasmic reticulum membrane. It is found in the microsome membrane. It carries out the reaction an organic molecule + reduced [NADPH--hemoprotein reductase] + O2 = an alcohol + oxidized [NADPH--hemoprotein reductase] + H2O + H(+). Its function is as follows. Cytochromes P450 are a group of heme-thiolate monooxygenases. In liver microsomes, this enzyme is involved in an NADPH-dependent electron transport pathway. It oxidizes a variety of structurally unrelated compounds, including steroids, fatty acids, and xenobiotics. The chain is Cytochrome P450 2D10 (Cyp2d10) from Rattus norvegicus (Rat).